The following is a 340-amino-acid chain: Uroporphyrinogen decarboxylase (340 aa).

Residues 23 to 27, Asp-72, Tyr-147, Thr-202, and His-316 each bind substrate; that span reads RQAGR.

This sequence belongs to the uroporphyrinogen decarboxylase family. In terms of assembly, homodimer.

The protein localises to the cytoplasm. The catalysed reaction is uroporphyrinogen III + 4 H(+) = coproporphyrinogen III + 4 CO2. Its pathway is porphyrin-containing compound metabolism; protoporphyrin-IX biosynthesis; coproporphyrinogen-III from 5-aminolevulinate: step 4/4. Catalyzes the decarboxylation of four acetate groups of uroporphyrinogen-III to yield coproporphyrinogen-III. In Pelobacter propionicus (strain DSM 2379 / NBRC 103807 / OttBd1), this protein is Uroporphyrinogen decarboxylase.